The sequence spans 148 residues: Lysozyme C (148 aa).

The signal sequence occupies residues 1–18 (MKALIVLGLVLLSVTVQG). In terms of domain architecture, C-type lysozyme spans 19 to 148 (KVFERCELAR…VRQYVQGCGV (130 aa)). Intrachain disulfides connect Cys24–Cys146, Cys48–Cys134, Cys83–Cys99, and Cys95–Cys113. Active-site residues include Glu53 and Asp71.

It belongs to the glycosyl hydrolase 22 family. Monomer.

The protein resides in the secreted. The catalysed reaction is Hydrolysis of (1-&gt;4)-beta-linkages between N-acetylmuramic acid and N-acetyl-D-glucosamine residues in a peptidoglycan and between N-acetyl-D-glucosamine residues in chitodextrins.. Its function is as follows. Lysozymes have primarily a bacteriolytic function; those in tissues and body fluids are associated with the monocyte-macrophage system and enhance the activity of immunoagents. This chain is Lysozyme C (LYZ), found in Homo sapiens (Human).